Reading from the N-terminus, the 800-residue chain is Putative antiporter subunit mnhA2 (800 aa).

20 helical membrane-spanning segments follow: residues 1 to 21 (MSLV…LLMS), 33 to 53 (IALV…PSVA), 78 to 98 (GLSL…FFYA), 118 to 138 (LFMF…MYIF), 167 to 187 (FMIT…LYIM), 207 to 227 (GLFI…SAQF), 241 to 261 (TPVS…FLLL), 273 to 293 (YIYI…ITAL), 300 to 320 (GILA…VGIG), 331 to 351 (IASI…NHAI), 387 to 407 (LVMT…GFLS), 424 to 444 (FSLI…IFTF), 472 to 492 (PWLF…IFFV), 527 to 547 (GFNI…VLAI), 595 to 615 (IIMT…RIGL), 627 to 647 (GALE…LIFI), 651 to 671 (LTMV…FIAM), 676 to 696 (LALT…VSFS), 712 to 732 (IIKI…IFIT), and 768 to 788 (LDTL…YTLL).

The protein belongs to the CPA3 antiporters (TC 2.A.63) subunit A family. In terms of assembly, may form a heterooligomeric complex that consists of seven subunits: mnhA2, mnhB2, mnhC2, mnhD2, mnhE2, mnhF2 and mnhG2.

It is found in the cell membrane. This chain is Putative antiporter subunit mnhA2 (mnhA2), found in Staphylococcus aureus (strain Mu3 / ATCC 700698).